The sequence spans 277 residues: Large ribosomal subunit protein uL2 (277 aa).

Disordered stretches follow at residues 1–55 (MGIR…RHQG) and 217–277 (KRPS…KKKR). Basic residues predominate over residues 37-55 (LHSKGGRNGHGRITARHQG).

Belongs to the universal ribosomal protein uL2 family. As to quaternary structure, part of the 50S ribosomal subunit. Forms a bridge to the 30S subunit in the 70S ribosome.

In terms of biological role, one of the primary rRNA binding proteins. Required for association of the 30S and 50S subunits to form the 70S ribosome, for tRNA binding and peptide bond formation. It has been suggested to have peptidyltransferase activity; this is somewhat controversial. Makes several contacts with the 16S rRNA in the 70S ribosome. The polypeptide is Large ribosomal subunit protein uL2 (Thermobifida fusca (strain YX)).